A 100-amino-acid chain; its full sequence is Large ribosomal subunit protein uL23 (100 aa).

This sequence belongs to the universal ribosomal protein uL23 family. In terms of assembly, part of the 50S ribosomal subunit. Contacts protein L29, and trigger factor when it is bound to the ribosome.

One of the early assembly proteins it binds 23S rRNA. One of the proteins that surrounds the polypeptide exit tunnel on the outside of the ribosome. Forms the main docking site for trigger factor binding to the ribosome. This is Large ribosomal subunit protein uL23 from Acaryochloris marina (strain MBIC 11017).